Here is a 485-residue protein sequence, read N- to C-terminus: 1-aminocyclopropane-1-carboxylate synthase 2 (485 aa).

Substrate is bound by residues E55 and Y92. Residue K278 is modified to N6-(pyridoxal phosphate)lysine. S460 carries the phosphoserine modification.

This sequence belongs to the class-I pyridoxal-phosphate-dependent aminotransferase family. As to quaternary structure, homodimer and heterodimer. In vivo, the relevance of heterodimerization with other ACS enzymes is however unsure. It depends on pyridoxal 5'-phosphate as a cofactor. Post-translationally, phosphorylated on Ser 460; phosphorylation may regulate its turnover. May be processed at its C-terminus.

The catalysed reaction is S-adenosyl-L-methionine = 1-aminocyclopropane-1-carboxylate + S-methyl-5'-thioadenosine + H(+). It participates in alkene biosynthesis; ethylene biosynthesis via S-adenosyl-L-methionine; ethylene from S-adenosyl-L-methionine: step 1/2. In terms of biological role, 1-aminocyclopropane-1-carboxylate synthase (ACS) enzymes catalyze the conversion of S-adenosyl-L-methionine (SAM) into 1-aminocyclopropane-1-carboxylate (ACC), a direct precursor of ethylene. The sequence is that of 1-aminocyclopropane-1-carboxylate synthase 2 (ACS2) from Solanum lycopersicum (Tomato).